Here is a 315-residue protein sequence, read N- to C-terminus: MKIVFLDSTAIPKHISIPRPSFEHTWTEYEHTSAEQTIERVKDADIVITSKVIFDRETLQQLPKLKLIAITATGTNNVDLVAAEEMGIAVRNVTGYSSTTVPEHVIGLIFSLKHSLAGWLRDQTEAKWAESKQFCYFDYPITDVRGSTLGVFGKGCLGTEVGRLANAVGMKVLYAEHKDATVCREGYTPFDEVLKQADIVTLHCPLTETTKDLINAETLSKMKKGAFLINTGRGPLIDELALVDALKTGHLGGAALDVMVKEPPEKDNPLILAAKTMPNLIITPHIAWASDSAVTTLVGKVMQNIEEFVQQLHQK.

NAD(+) is bound by residues T73, C156 to L157, T231 to R233, and D257. R233 is an active-site residue. The active site involves E262. H285 (proton donor) is an active-site residue. H285 to W288 lines the NAD(+) pocket.

Belongs to the D-isomer specific 2-hydroxyacid dehydrogenase family.

This chain is Putative 2-hydroxyacid dehydrogenase HI_1556, found in Haemophilus influenzae (strain ATCC 51907 / DSM 11121 / KW20 / Rd).